Here is a 90-residue protein sequence, read N- to C-terminus: Probable Fe(2+)-trafficking protein (90 aa).

This sequence belongs to the Fe(2+)-trafficking protein family.

In terms of biological role, could be a mediator in iron transactions between iron acquisition and iron-requiring processes, such as synthesis and/or repair of Fe-S clusters in biosynthetic enzymes. This chain is Probable Fe(2+)-trafficking protein, found in Herminiimonas arsenicoxydans.